We begin with the raw amino-acid sequence, 498 residues long: ATP synthase subunit beta, chloroplastic (498 aa).

Position 172–179 (172–179 (GGAGVGKT)) interacts with ATP.

Belongs to the ATPase alpha/beta chains family. As to quaternary structure, F-type ATPases have 2 components, CF(1) - the catalytic core - and CF(0) - the membrane proton channel. CF(1) has five subunits: alpha(3), beta(3), gamma(1), delta(1), epsilon(1). CF(0) has four main subunits: a(1), b(1), b'(1) and c(9-12).

The protein resides in the plastid. It localises to the chloroplast thylakoid membrane. The catalysed reaction is ATP + H2O + 4 H(+)(in) = ADP + phosphate + 5 H(+)(out). In terms of biological role, produces ATP from ADP in the presence of a proton gradient across the membrane. The catalytic sites are hosted primarily by the beta subunits. This is ATP synthase subunit beta, chloroplastic from Idiospermum australiense (Ribbonwood tree).